We begin with the raw amino-acid sequence, 133 residues long: MRKHVLAASFSMLSLLVIMGDTDSKTDSSFIMDSDPRRCMRHHYVDSISHPLYKCSSKMVLLARCEGHCSQASRSEPLVSFSTVLKQPFRSSCHCCRPQTSKLKALRLRCSGGMRLTATYRYILSCHCEECNS.

The N-terminal stretch at 1 to 24 (MRKHVLAASFSMLSLLVIMGDTDS) is a signal peptide. 4 cysteine pairs are disulfide-bonded: C39-C96, C55-C110, C65-C126, and C69-C128. The CTCK domain maps to 39–132 (CMRHHYVDSI…ILSCHCEECN (94 aa)).

As to quaternary structure, homodimer; disulfide-linked. Component of a complex, at least composed of TSPAN12, FZD4, LRP5/6 and norrin (NDP). Binds FZD4 with high affinity. Interacts with LRP6 (via Beta-propellers 1 and 2). Expressed in the outer nuclear, inner nuclear and ganglion cell layers of the retina, and in fetal and adult brain.

The protein localises to the secreted. Activates the canonical Wnt signaling pathway through FZD4 and LRP5 coreceptor. Plays a central role in retinal vascularization by acting as a ligand for FZD4 that signals via stabilizing beta-catenin (CTNNB1) and activating LEF/TCF-mediated transcriptional programs. Acts in concert with TSPAN12 to activate FZD4 independently of the Wnt-dependent activation of FZD4, suggesting the existence of a Wnt-independent signaling that also promote accumulation the beta-catenin (CTNNB1). May be involved in a pathway that regulates neural cell differentiation and proliferation. Possible role in neuroectodermal cell-cell interaction. This is Norrin (NDP) from Homo sapiens (Human).